The sequence spans 126 residues: Large ribosomal subunit protein bL19 (126 aa).

This sequence belongs to the bacterial ribosomal protein bL19 family.

This protein is located at the 30S-50S ribosomal subunit interface and may play a role in the structure and function of the aminoacyl-tRNA binding site. In Bordetella petrii (strain ATCC BAA-461 / DSM 12804 / CCUG 43448), this protein is Large ribosomal subunit protein bL19.